Here is a 189-residue protein sequence, read N- to C-terminus: uncharacterized protein (189 aa).

Basic and acidic residues predominate over residues 1 to 15 (MDKHGVKTPLWRKEV). Positions 1-77 (MDKHGVKTPL…SPLRQESSSQ (77 aa)) are disordered. Composition is skewed to acidic residues over residues 16–29 (EDPE…EDDS) and 46–56 (SATETEEDSRD). Residues 65 to 77 (VSYSPLRQESSSQ) show a composition bias toward polar residues.

This is an uncharacterized protein from Mus musculus (Mouse).